The chain runs to 391 residues: 3-ketoacyl-CoA thiolase (391 aa).

Cys-95 acts as the Acyl-thioester intermediate in catalysis. Residues His-347 and Cys-377 each act as proton acceptor in the active site.

It belongs to the thiolase-like superfamily. Thiolase family. As to quaternary structure, heterotetramer of two alpha chains (FadB) and two beta chains (FadA).

The protein localises to the cytoplasm. It catalyses the reaction an acyl-CoA + acetyl-CoA = a 3-oxoacyl-CoA + CoA. The protein operates within lipid metabolism; fatty acid beta-oxidation. Functionally, catalyzes the final step of fatty acid oxidation in which acetyl-CoA is released and the CoA ester of a fatty acid two carbons shorter is formed. The polypeptide is 3-ketoacyl-CoA thiolase (Marinobacter nauticus (strain ATCC 700491 / DSM 11845 / VT8) (Marinobacter aquaeolei)).